The sequence spans 222 residues: Interleukin-12 subunit alpha (222 aa).

The signal sequence occupies residues 1–25 (MCPPRGLLLVTILVLLSHLDHLTWA). Intrachain disulfides connect Cys-40–Cys-113, Cys-67–Cys-199, and Cys-88–Cys-126. N-linked (GlcNAc...) asparagine glycans are attached at residues Asn-42, Asn-96, and Asn-110.

The protein belongs to the IL-6 superfamily. Heterodimer with IL12B; disulfide-linked. This heterodimer is known as interleukin IL-12. Heterodimer with EBI3/IL27B; not disulfide-linked. This heterodimer is known as interleukin IL-35. Interacts with NBR1; this interaction promotes IL-12 secretion.

It is found in the secreted. Functionally, heterodimerizes with IL12B to form the IL-12 cytokine or with EBI3/IL27B to form the IL-35 cytokine. IL-12 is primarily produced by professional antigen-presenting cells (APCs) such as B-cells and dendritic cells (DCs) as well as macrophages and granulocytes and regulates T-cell and natural killer-cell responses, induces the production of interferon-gamma (IFN-gamma), favors the differentiation of T-helper 1 (Th1) cells and is an important link between innate resistance and adaptive immunity. Mechanistically, exerts its biological effects through a receptor composed of IL12R1 and IL12R2 subunits. Binding to the receptor results in the rapid tyrosine phosphorylation of a number of cellular substrates including the JAK family kinases TYK2 and JAK2. In turn, recruited STAT4 gets phosphorylated and translocates to the nucleus where it regulates cytokine/growth factor responsive genes. As part of IL-35, plays essential roles in maintaining the immune homeostasis of the liver microenvironment and also functions as an immune-suppressive cytokine. Mediates biological events through unconventional receptors composed of IL12RB2 and gp130/IL6ST heterodimers or homodimers. Signaling requires the transcription factors STAT1 and STAT4, which form a unique heterodimer that binds to distinct DNA sites. The sequence is that of Interleukin-12 subunit alpha (IL12A) from Canis lupus familiaris (Dog).